The primary structure comprises 399 residues: Ras-related GTP-binding protein C (399 aa).

Positions Met-1–Asp-20 are disordered. Ser-2 carries the N-acetylserine modification. A phosphoserine mark is found at Ser-2 and Ser-15. GDP contacts are provided by Arg-71, Ser-72, Gly-73, Lys-74, Ser-75, Ser-76, Thr-90, Glu-94, Thr-96, His-178, Lys-179, Asp-181, Ser-219, and Ile-220. Residue Lys-74 coordinates GTP. Residue Thr-90 coordinates GTP. Residue Thr-96 coordinates GTP. Thr-96 carries the phosphothreonine modification. Asp-181 provides a ligand contact to GTP.

Belongs to the GTR/RAG GTP-binding protein family. Forms a heterodimer with RRAGA, in a sequence-independent manner, and RRAGB. Heterodimerization stabilizes proteins of the heterodimer. The GDP-bound form of RRAGC (in complex with the GTP-bound form of RRAGA or RRAGB), interacts with RPTOR, thereby promoting recruitment of mTORC1 to the lysosomes. Component of the lysosomal folliculin complex (LFC), composed of FLCN, FNIP1 (or FNIP2), RagA/RRAGA or RagB/RRAGB GDP-bound, RagC/RRAGC or RagD/RRAGD GTP-bound, and Ragulator. Interacts with NOL8. Interacts with SH3BP4; the interaction with this negative regulator is most probably direct, preferentially occurs with the inactive GDP-bound form of RRAGB, is negatively regulated by amino acids and prevents interaction with RPTOR. The Rag heterodimer interacts with SLC38A9; the probable amino acid sensor. Interacts with SESN1, SESN2 and SESN3. Interacts with PIP4P1. The Rag heterodimer interacts with the Ragulator complex. The GDP-bound form interacts with TFEB. The GDP-bound form interacts with TFE3.

Its subcellular location is the cytoplasm. It localises to the nucleus. The protein localises to the lysosome membrane. It carries out the reaction GTP + H2O = GDP + phosphate + H(+). The activation of RagC/RRAGC is mediated by a GTPase activating protein (GAP). In high-amino acid conditions, activated by GTPase activating protein FLCN that stimulates RRAGC GTPase activity to turn it into its active GDP-bound form. In response to amino acid depletion, the GATOR1 complex inactivates RagC/RRAGC by securing the GTP-bound inactive form. Functionally, guanine nucleotide-binding protein that plays a crucial role in the cellular response to amino acid availability through regulation of the mTORC1 signaling cascade. Forms heterodimeric Rag complexes with RagA/RRAGA or RagB/RRAGB and cycles between an inactive GTP-bound and an active GDP-bound form: RagC/RRAGC is in its active form when GDP-bound RagC/RRAGC forms a complex with GTP-bound RagA/RRAGA (or RagB/RRAGB) and in an inactive form when GTP-bound RagC/RRAGC heterodimerizes with GDP-bound RagA/RRAGA (or RagB/RRAGB). In its GDP-bound active form, promotes the recruitment of mTORC1 to the lysosomes and its subsequent activation by the GTPase RHEB. This is a crucial step in the activation of the MTOR signaling cascade by amino acids. Also plays a central role in the non-canonical mTORC1 complex, which acts independently of RHEB and specifically mediates phosphorylation of MiT/TFE factors TFEB and TFE3: GDP-bound RagC/RRAGC mediates recruitment of MiT/TFE factors TFEB and TFE3. The chain is Ras-related GTP-binding protein C from Homo sapiens (Human).